A 1073-amino-acid chain; its full sequence is MPKRTDIKSILILGAGPIVIGQACEFDYSGAQACKALREEGYRVILVNSNPATIMTDPEMADATYIEPIHWEVVRKIIEKERPDAVLPTMGGQTALNCALELERQGVLEEFGVTMIGATADAIDKAEDRRRFDVAMKKIGLETARSGIAHSMEEALAVAAEVGFPCIIRPSFTMGGSGGGIAYNREEFEEICARGLDLSPTKELLIDESLIGWKEYEMEVVRDKNDNCIIVCSIENFDAMGIHTGDSITVAPAQTLTDKEYQIMRNASMAVLREIGVETGGSNVQFAVNPKNGRLIVIEMNPRVSRSSALASKATGFPIAKVAAKLAVGYTLDELMNDITGGRTPASFEPSIDYVVTKIPRFNFEKFAGANDRLTTQMKSVGEVMAIGRTQQESLQKALRGLEVGATGFDPKVSLDDPEALTKIRRELKDAGAERIWYIADAFRAGLSVDGVFNLTNIDRWFLVQIEELVRLEEKVAEVGITGLHAEFLRQLKRKGFADARLAKLAGVREAEIRKLRDQYDLHPVYKRVDTCAAEFATDTAYMYSTYEEECEANPSTDREKIMVLGGGPNRIGQGIEFDYCCVHASLALREDGYETIMVNCNPETVSTDYDTSDRLYFEPVTLEDVLEIVRIEKPKGVIVQYGGQTPLKLARALEAAGVPVIGTSPDAIDRAEDRERFQHAVERLKLKQPANATVTTIEMAVEKAKEIGYPLVVRPSYVLGGRAMEIVYDEADLRRYFQTAVSVSNDAPVLLDHFLDDAVEVDVDAICDGEVVLIGGIMEHIEQAGVHSGDSACSLPAYTLSQEIQDVMRQQVQKLAFELQVRGLMNVQFAVKNNEVYLIEVNPRAARTVPFVSKATGVPLAKVAARVMAGKSLAEQGVTKEVIPPYYSVKEVVLPFNKFPGVDPLLGPEMRSTGEVMGVGRTFAEAFAKAQLGSNSTMKKHGRALLSVREGDKERVVDLAAKLLKQGFELDATHGTAIVLGEAGINPRLVNKVHEGRPHIQDRIKNGEYTYIINTTSGRRAIEDSRVIRRSALQYKVHYDTTLNGGFATAMALNADATEKVISVQEMHAQIK.

The segment at 2–403 (PKRTDIKSIL…SLQKALRGLE (402 aa)) is carboxyphosphate synthetic domain. R129, R169, G175, G176, E208, L210, E215, G241, I242, H243, Q285, and E299 together coordinate ATP. Residues 133–328 (DVAMKKIGLE…IAKVAAKLAV (196 aa)) enclose the ATP-grasp 1 domain. Mg(2+)-binding residues include Q285, E299, and N301. Mn(2+) is bound by residues Q285, E299, and N301. The oligomerization domain stretch occupies residues 404 to 553 (VGATGFDPKV…YSTYEEECEA (150 aa)). A carbamoyl phosphate synthetic domain region spans residues 554 to 936 (NPSTDREKIM…AFAKAQLGSN (383 aa)). An ATP-grasp 2 domain is found at 679–870 (QHAVERLKLK…LAKVAARVMA (192 aa)). 10 residues coordinate ATP: R715, H754, L756, E761, G786, V787, H788, S789, Q829, and E841. Q829, E841, and N843 together coordinate Mg(2+). Positions 829, 841, and 843 each coordinate Mn(2+). The region spanning 937-1073 (STMKKHGRAL…SVQEMHAQIK (137 aa)) is the MGS-like domain. Residues 937-1073 (STMKKHGRAL…SVQEMHAQIK (137 aa)) are allosteric domain.

It belongs to the CarB family. As to quaternary structure, composed of two chains; the small (or glutamine) chain promotes the hydrolysis of glutamine to ammonia, which is used by the large (or ammonia) chain to synthesize carbamoyl phosphate. Tetramer of heterodimers (alpha,beta)4. Mg(2+) is required as a cofactor. Requires Mn(2+) as cofactor.

The catalysed reaction is hydrogencarbonate + L-glutamine + 2 ATP + H2O = carbamoyl phosphate + L-glutamate + 2 ADP + phosphate + 2 H(+). It catalyses the reaction hydrogencarbonate + NH4(+) + 2 ATP = carbamoyl phosphate + 2 ADP + phosphate + 2 H(+). It participates in amino-acid biosynthesis; L-arginine biosynthesis; carbamoyl phosphate from bicarbonate: step 1/1. The protein operates within pyrimidine metabolism; UMP biosynthesis via de novo pathway; (S)-dihydroorotate from bicarbonate: step 1/3. Large subunit of the glutamine-dependent carbamoyl phosphate synthetase (CPSase). CPSase catalyzes the formation of carbamoyl phosphate from the ammonia moiety of glutamine, carbonate, and phosphate donated by ATP, constituting the first step of 2 biosynthetic pathways, one leading to arginine and/or urea and the other to pyrimidine nucleotides. The large subunit (synthetase) binds the substrates ammonia (free or transferred from glutamine from the small subunit), hydrogencarbonate and ATP and carries out an ATP-coupled ligase reaction, activating hydrogencarbonate by forming carboxy phosphate which reacts with ammonia to form carbamoyl phosphate. This is Carbamoyl phosphate synthase large chain from Escherichia coli O6:H1 (strain CFT073 / ATCC 700928 / UPEC).